The primary structure comprises 363 residues: Actin-related protein 7 (363 aa).

Methionine 1 bears the N-acetylmethionine mark.

This sequence belongs to the actin family. Plant ARP7 subfamily. Mostly expressed in flowers, and, to a lower extent, in roots, seedlings, leaves and siliques (at protein level).

It is found in the nucleus. The protein localises to the cytoplasm. Functionally, essential protein required during embryogenesis and all plant development stages, probably through a chromatin-mediated regulation of gene expression. The protein is Actin-related protein 7 (ARP7) of Arabidopsis thaliana (Mouse-ear cress).